A 150-amino-acid polypeptide reads, in one-letter code: Photosystem I reaction center subunit XI (150 aa).

Residues 1-72 (MSDFIQSYNN…DKLGPLRNTD (72 aa)) lie on the Stromal side of the membrane. Residues 73–93 (VALLSGFLSAVGLIIILTVCL) traverse the membrane as a helical segment. Residues 94-118 (SMYGNVSFDKDDAKDLLQTTEGWGQ) lie on the Lumenal side of the membrane. A helical membrane pass occupies residues 119–139 (FTAGFLVGAVGGSGFAYLLLA). Topologically, residues 140–150 (NIPVLQNLGLS) are stromal.

It belongs to the PsaL family.

It is found in the plastid. The protein resides in the chloroplast thylakoid membrane. This chain is Photosystem I reaction center subunit XI, found in Gracilaria tenuistipitata var. liui (Red alga).